The sequence spans 385 residues: MAASPVLATTSHPIGHEAAVVTDADLDRHYAVKLAGKLNDEMAWVGQQFTGEEDFVVCLSEADVAEVNAALTAFQDTGLKPGYLSPETFKLPKLGPKLRLLSQRIHEQEGFIVLRGLQPWRYRRLENTIVFTGIASYIGNRRGVQCADGPVMTHIFDYSTEVEEKEKLNDGYLGHANRTSYLPFHTDDGHIISLYCLQAADIGGRTLLASSHAIYNHLLETRPDVIETLKEEWIWDSFIPEKPSFIRPLLLEQDGKLICNYRIRPFLGTPGYPRNAALGPLPAHQEEALNTVAEIAEKLSLKFEFKTGDIQFLNNLSILHAREEFHCAKGDTTRRHLLRLVQMDDELAWRLPPGLSKDMDKMFQHDLEEEKFIWSPEPLPYVIGQ.

It participates in mycotoxin biosynthesis. In terms of biological role, taurine hydroxylase-like protein; part of the satratoxin SC3 cluster involved in the biosynthesis of satratoxins, trichothecene mycotoxins that are associated with human food poisonings. Satratoxins are suggested to be made by products of multiple gene clusters (SC1, SC2 and SC3) that encode 21 proteins in all, including polyketide synthases, acetyltransferases, and other enzymes expected to modify the trichothecene skeleton. SC1 encodes 10 proteins, SAT1 to SAT10. The largest are SAT8, which encodes a putative polyketide synthase (PKS) with a conventional non-reducing architecture, and SAT10, a putative protein containing four ankyrin repeats and thus may be involved in protein scaffolding. The putative short-chain reductase SAT3 may assist the PKS in some capacity. SAT6 contains a secretory lipase domain and acts probably as a trichothecene esterase. SAT5 encodes a putative acetyltransferase, and so, with SAT6, may affect endogenous protection from toxicity. The probable transcription factor SAT9 may regulate the expression of the SC1 cluster. SC2 encodes proteins SAT11 to SAT16, the largest of which encodes the putative reducing PKS SAT13. SAT11 is a cytochrome P450 monooxygenase, while SAT14 and SAT16 are probable acetyltransferases. The SC2 cluster may be regulated by the transcription factor SAT15. SC3 is a small cluster that encodes 5 proteins, SAT17 to SAT21. SAT21 is a putative MFS-type transporter which may have a role in exporting secondary metabolites. The four other proteins putatively encoded in SC3 include the taurine hydroxylase-like protein SAT17, the O-methyltransferase SAT18, the acetyltransferase SAT19, and the Cys6-type zinc finger SAT20, the latter being probably involved in regulation of SC3 expression. This is Taurine hydroxylase-like protein SAT17 from Stachybotrys chartarum (strain CBS 109288 / IBT 7711) (Toxic black mold).